The sequence spans 201 residues: Rho GDP-dissociation inhibitor 2 (201 aa).

The tract at residues 1–38 (MTEKAPEPHVEEDDDDELDSKLNYKPPPQKSLKELQEM) is disordered. At Thr-2 the chain carries N-acetylthreonine. Lys-21 is modified (N6-acetyllysine). Tyr-24 carries the phosphotyrosine modification. 5 positions are modified to N6-acetyllysine: Lys-25, Lys-40, Lys-47, Lys-102, and Lys-124. Position 145 is a phosphoserine (Ser-145). Lys-175 bears the N6-acetyllysine mark.

It belongs to the Rho GDI family. Interacts with RHOA. Interacts with RAC1. Interacts with RAC2. Interacts with CDC42. Detected in bone marrow, thymus and spleen.

The protein localises to the cytoplasm. It localises to the cytosol. Regulates the GDP/GTP exchange reaction of the Rho proteins by inhibiting the dissociation of GDP from them, and the subsequent binding of GTP to them. Regulates reorganization of the actin cytoskeleton mediated by Rho family members. The chain is Rho GDP-dissociation inhibitor 2 (ARHGDIB) from Homo sapiens (Human).